A 273-amino-acid polypeptide reads, in one-letter code: 4-hydroxy-tetrahydrodipicolinate reductase (273 aa).

NAD(+) is bound by residues 12 to 17 and E38; that span reads GAGGRM. R39 provides a ligand contact to NADP(+). NAD(+) contacts are provided by residues 102–104 and 126–129; these read GTT and AANF. H159 (proton donor/acceptor) is an active-site residue. H160 is a (S)-2,3,4,5-tetrahydrodipicolinate binding site. The Proton donor role is filled by K163. 169–170 contacts (S)-2,3,4,5-tetrahydrodipicolinate; it reads GT.

It belongs to the DapB family. In terms of assembly, homotetramer.

The protein localises to the cytoplasm. It carries out the reaction (S)-2,3,4,5-tetrahydrodipicolinate + NAD(+) + H2O = (2S,4S)-4-hydroxy-2,3,4,5-tetrahydrodipicolinate + NADH + H(+). The enzyme catalyses (S)-2,3,4,5-tetrahydrodipicolinate + NADP(+) + H2O = (2S,4S)-4-hydroxy-2,3,4,5-tetrahydrodipicolinate + NADPH + H(+). The protein operates within amino-acid biosynthesis; L-lysine biosynthesis via DAP pathway; (S)-tetrahydrodipicolinate from L-aspartate: step 4/4. In terms of biological role, catalyzes the conversion of 4-hydroxy-tetrahydrodipicolinate (HTPA) to tetrahydrodipicolinate. This is 4-hydroxy-tetrahydrodipicolinate reductase from Escherichia coli O139:H28 (strain E24377A / ETEC).